A 60-amino-acid chain; its full sequence is MPERKTQPTTDQPWTKPNDGGDESGPRSPEVERPNTRDLLERMKRVDPRQARRYRQRSGE.

The disordered stretch occupies residues 1-60 (MPERKTQPTTDQPWTKPNDGGDESGPRSPEVERPNTRDLLERMKRVDPRQARRYRQRSGE). The span at 29–50 (PEVERPNTRDLLERMKRVDPRQ) shows a compositional bias: basic and acidic residues. Residues 51–60 (ARRYRQRSGE) are compositionally biased toward basic residues. Glu60 is covalently cross-linked (Isoglutamyl lysine isopeptide (Glu-Lys) (interchain with K-? in acceptor proteins)).

The protein belongs to the ubiquitin-like protein UBact family.

In terms of biological role, may function as a protein modifier covalently attached to lysine residues of substrate proteins. This may serve to target the modified proteins for degradation by proteasomes. The protein is Prokaryotic ubiquitin-like protein UBact of Fraserbacteria sp. (strain RBG_16_55_9).